The chain runs to 561 residues: Nephronectin (561 aa).

Residues 1–19 form the signal peptide; it reads MAVLLAAVLASSLYLQVAA. An EGF-like 1 domain is found at 52–87; sequence SWGQCQPVCQPQCKHGECVGPNKCKCHPGFAGKTCN. 6 disulfide bridges follow: Cys-56-Cys-69, Cys-60-Cys-75, Cys-77-Cys-86, Cys-93-Cys-104, Cys-100-Cys-113, and Cys-115-Cys-127. One can recognise an EGF-like 2; calcium-binding domain in the interval 89–128; that stretch reads DLNECGLKPRPCKHRCMNTFGSYKCYCLNGYMLLPDGSCS. Positions 132 to 168 constitute an EGF-like 3 domain; that stretch reads SCSMANCQYGCDVVKGQVRCQCPSPGLQLAPDGRTCV. The region spanning 169–213 is the EGF-like 4; calcium-binding domain; it reads DIDECATGRVSCPRFRQCVNTFGSYICKCHTGFDLMYIGGKYQCH. 6 disulfides stabilise this stretch: Cys-173-Cys-186, Cys-180-Cys-195, Cys-197-Cys-212, Cys-218-Cys-231, Cys-225-Cys-240, and Cys-242-Cys-253. Positions 214 to 254 constitute an EGF-like 5; calcium-binding domain; sequence DIDECSLGQHQCSSYARCYNIHGSYKCQCRDGYEGDGLNCV. A disordered region spans residues 266-370; sequence PIHMPERNGT…TSTTTRVITV (105 aa). A compositionally biased stretch (low complexity) spans 307 to 316; it reads TNRPTSKPTT. Residues 317 to 348 show a composition bias toward pro residues; the sequence is RPTPNPTPQPTPPPPPPLPTEPRTTPLPPTPE. Over residues 352–366 the composition is skewed to low complexity; that stretch reads TRPTTIAPATSTTTR. The short motif at 382–384 is the Integrin interaction element; the sequence is RGD. One can recognise an MAM domain in the interval 420-561; sequence HSCNFDHGLC…DDVSLKRGRC (142 aa).

The protein belongs to the nephronectin family. In terms of assembly, homodimer and homotrimer. In terms of tissue distribution, expressed in kidney (at protein level).

The protein localises to the secreted. It is found in the extracellular space. It localises to the extracellular matrix. In terms of biological role, functional ligand of integrin alpha-8/beta-1 in kidney development. Regulates the expression of GDNF with integrin alpha-8/beta-1 which is essential for kidney development. May also play a role in the development and function of various tissues, regulating cell adhesion, spreading and survival through the binding of several integrins. The chain is Nephronectin (Npnt) from Mus musculus (Mouse).